The sequence spans 697 residues: Ribosomal RNA large subunit methyltransferase K/L (697 aa).

One can recognise a THUMP domain in the interval 43–154 (ILYNSLMWSR…QNLVHIMLDL (112 aa)).

Belongs to the methyltransferase superfamily. RlmKL family.

It localises to the cytoplasm. It catalyses the reaction guanosine(2445) in 23S rRNA + S-adenosyl-L-methionine = N(2)-methylguanosine(2445) in 23S rRNA + S-adenosyl-L-homocysteine + H(+). The catalysed reaction is guanosine(2069) in 23S rRNA + S-adenosyl-L-methionine = N(2)-methylguanosine(2069) in 23S rRNA + S-adenosyl-L-homocysteine + H(+). Specifically methylates the guanine in position 2445 (m2G2445) and the guanine in position 2069 (m7G2069) of 23S rRNA. This Buchnera aphidicola subsp. Schizaphis graminum (strain Sg) protein is Ribosomal RNA large subunit methyltransferase K/L.